We begin with the raw amino-acid sequence, 497 residues long: D-gluconate dehydratase (497 aa).

Residue glutamate 303 coordinates Mg(2+). The Proton donor role is filled by histidine 305. Positions 329 and 355 each coordinate Mg(2+). The active-site Proton acceptor is the histidine 405.

The protein belongs to the mandelate racemase/muconate lactonizing enzyme family. GaD subfamily. It depends on Mg(2+) as a cofactor.

It catalyses the reaction D-gluconate = 2-dehydro-3-deoxy-D-gluconate + H2O. It participates in carbohydrate acid metabolism; D-gluconate degradation. Involved in the degradation of glucose via the Entner-Doudoroff pathway. Catalyzes the dehydration of gluconate to produce 2-keto-3-deoxygluconate (KDG). It is not able to use D-galactonate as substrate. The sequence is that of D-gluconate dehydratase (gad) from Thermoproteus tenax.